The primary structure comprises 158 residues: MDKVPITIRGYAALEEELKHRQQVERPRIIQAIAEARALGDLSENAEYHAAKEAQSLNEGRVLELESLISRAEIIDVSKLSGTKVKFGATVQLIDEDTEEEKTYQIVGEPEADVRSGRVSITSPVARALIGKGVGDTVEVTTPGGGKSYEIVGIRYVG.

The protein belongs to the GreA/GreB family.

In terms of biological role, necessary for efficient RNA polymerase transcription elongation past template-encoded arresting sites. The arresting sites in DNA have the property of trapping a certain fraction of elongating RNA polymerases that pass through, resulting in locked ternary complexes. Cleavage of the nascent transcript by cleavage factors such as GreA or GreB allows the resumption of elongation from the new 3'terminus. GreA releases sequences of 2 to 3 nucleotides. In Methylobacterium sp. (strain 4-46), this protein is Transcription elongation factor GreA.